The primary structure comprises 419 residues: Testin (419 aa).

Residues 92 to 199 form the PET domain; sequence MILTNPVAAK…GDVKLPSEMN (108 aa). 2 disordered regions span residues 133–164 and 199–222; these read EKQP…PSKC and NAQG…GSKD. Residues 155-164 show a composition bias toward basic and acidic residues; sequence PAHDQDPSKC. 3 LIM zinc-binding domains span residues 232 to 295, 297 to 357, and 360 to 419; these read YSCY…CDSE, PRCA…NHAV, and QGCH…KMMS.

This sequence belongs to the prickle / espinas / testin family. In terms of assembly, interacts via LIM domain 1 with ZYX. Interacts (via LIM domain 3) with ENAH and VASP. Interacts with ALKBH4, talin, actin, alpha-actinin, GRIP1 and PXN. Interacts (via LIM domain 2) with ACTL7A (via N-terminus). Heterodimer with ACTL7A; the heterodimer interacts with ENAH to form a heterotrimer.

It is found in the cytoplasm. The protein resides in the cell junction. The protein localises to the focal adhesion. In terms of biological role, scaffold protein that may play a role in cell adhesion, cell spreading and in the reorganization of the actin cytoskeleton. Plays a role in the regulation of cell proliferation. May act as a tumor suppressor. This Rattus norvegicus (Rat) protein is Testin (Tes).